The chain runs to 1363 residues: Spike glycoprotein (1363 aa).

The signal sequence occupies residues 1–13 (MFLILLISLPTAF). The Extracellular portion of the chain corresponds to 14–1307 (AVIGDLKCTT…GTYEYYVKWP (1294 aa)). Residues 15–298 (VIGDLKCTTV…DFMSEIKCKT (284 aa)) enclose the BetaCoV S1-NTD domain. Cystine bridges form between C21-C165, C160-C193, C172-C252, C286-C296, and C331-C356. 2 N-linked (GlcNAc...) asparagine; by host glycosylation sites follow: N59 and N133. A glycan (N-linked (GlcNAc...) asparagine; by host) is linked at N198. The region spanning 329-617 (PDCNIEAWLN…DVNSGTTCST (289 aa)) is the BetaCoV S1-CTD domain. Residue N359 is glycosylated (N-linked (GlcNAc...) asparagine; by host). Disulfide bonds link C374–C427 and C386–C615. N-linked (GlcNAc...) asparagine; by host glycans are attached at residues N437, N649, N676, N696, N714, N739, and N788. Fusion peptide stretches follow at residues 914 to 935 (SAIE…VEAY) and 933 to 953 (EAYN…VQSY). N937 carries N-linked (GlcNAc...) asparagine; by host glycosylation. Residues C938 and C949 are joined by a disulfide bond. A heptad repeat 1 region spans residues 1014 to 1064 (QKLIANAFNNALGAIQEGFDATNSALVKIQAVVNANAEALNNLLQQLSNRF). The stretch at 1043 to 1087 (QAVVNANAEALNNLLQQLSNRFGAISSSLQEILSRLDALEAQAQI) forms a coiled coil. N1194, N1224, N1234, N1253, N1267, and N1288 each carry an N-linked (GlcNAc...) asparagine; by host glycan. Residues 1258–1296 (APDLSLDYINVTFLDLQDEMNRLQEAIKVLNQSYINLKD) are heptad repeat 2. Residues 1269–1297 (TFLDLQDEMNRLQEAIKVLNQSYINLKDI) are a coiled coil. Residues 1308 to 1328 (WYVWLLIGFAGVAMLVLLFFI) form a helical membrane-spanning segment. Topologically, residues 1329–1363 (CCCTGCGTSCFKKCGGCCDDYTGHQELVIKTSHDD) are cytoplasmic. Positions 1359-1363 (TSHDD) match the KxHxx motif.

It belongs to the betacoronaviruses spike protein family. Homotrimer; each monomer consists of a S1 and a S2 subunit. The resulting peplomers protrude from the virus surface as spikes. Specific enzymatic cleavages in vivo yield mature proteins. The precursor is processed into S1 and S2 by host cell furin or another cellular protease to yield the mature S1 and S2 proteins. Additionally, a second cleavage leads to the release of a fusion peptide after viral attachment to host cell receptor. Post-translationally, the cytoplasmic Cys-rich domain is palmitoylated. Spike glycoprotein is digested within host endosomes.

It localises to the virion membrane. The protein localises to the host endoplasmic reticulum-Golgi intermediate compartment membrane. It is found in the host cell membrane. In terms of biological role, attaches the virion to the cell membrane by interacting with host receptor, initiating the infection. Its function is as follows. Mediates fusion of the virion and cellular membranes by acting as a class I viral fusion protein. Under the current model, the protein has at least three conformational states: pre-fusion native state, pre-hairpin intermediate state, and post-fusion hairpin state. During viral and target cell membrane fusion, the coiled coil regions (heptad repeats) assume a trimer-of-hairpins structure, positioning the fusion peptide in close proximity to the C-terminal region of the ectodomain. The formation of this structure appears to drive apposition and subsequent fusion of viral and target cell membranes. Acts as a viral fusion peptide which is unmasked following S2 cleavage occurring upon virus endocytosis. This Bos taurus (Bovine) protein is Spike glycoprotein.